Consider the following 384-residue polypeptide: S-adenosylmethionine synthase (384 aa).

Histidine 15 is a binding site for ATP. Aspartate 17 contacts Mg(2+). Position 43 (glutamate 43) interacts with K(+). Glutamate 56 and glutamine 99 together coordinate L-methionine. The segment at 99 to 109 (QSPDINQGVDR) is flexible loop. Residues 164–166 (DAK), 230–231 (RF), aspartate 239, 245–246 (RK), alanine 262, and lysine 266 each bind ATP. Aspartate 239 lines the L-methionine pocket. Position 270 (lysine 270) interacts with L-methionine.

Belongs to the AdoMet synthase family. As to quaternary structure, homotetramer; dimer of dimers. It depends on Mg(2+) as a cofactor. K(+) serves as cofactor.

It localises to the cytoplasm. The catalysed reaction is L-methionine + ATP + H2O = S-adenosyl-L-methionine + phosphate + diphosphate. It functions in the pathway amino-acid biosynthesis; S-adenosyl-L-methionine biosynthesis; S-adenosyl-L-methionine from L-methionine: step 1/1. Its function is as follows. Catalyzes the formation of S-adenosylmethionine (AdoMet) from methionine and ATP. The overall synthetic reaction is composed of two sequential steps, AdoMet formation and the subsequent tripolyphosphate hydrolysis which occurs prior to release of AdoMet from the enzyme. The protein is S-adenosylmethionine synthase of Salmonella heidelberg (strain SL476).